A 74-amino-acid chain; its full sequence is Large ribosomal subunit protein uL29 (74 aa).

The protein belongs to the universal ribosomal protein uL29 family.

This chain is Large ribosomal subunit protein uL29, found in Streptomyces griseus subsp. griseus (strain JCM 4626 / CBS 651.72 / NBRC 13350 / KCC S-0626 / ISP 5235).